The primary structure comprises 224 residues: Abasic site processing protein YoqW (224 aa).

C2 (nucleophile) is an active-site residue. C2 carries the post-translational modification Thiazolidine linkage to a ring-opened DNA abasic site. E106 is a catalytic residue.

It belongs to the SOS response-associated peptidase family.

Its activity is regulated as follows. Formation and reversal of DNA-protein cross-link depends on DNA context. Catalyzes formation of the thiazolidine linkage in presence of abasic sites in single-stranded DNA. Mediates the reversal of the thiazolidine cross-link in presence of double stranded DNA. Functionally, sensor of abasic sites in single-stranded DNA (ssDNA) required to preserve genome integrity by promoting error-free repair of abasic sites. Recognizes and binds abasic sites in ssDNA at replication forks and chemically modifies the lesion by forming a covalent cross-link with DNA: forms a stable thiazolidine linkage between a ring-opened abasic site and the alpha-amino and sulfhydryl substituents of its N-terminal catalytic cysteine residue. The DNA-protein cross-link is then reversed: able to catalyze the reversal of the thiazolidine cross-link and cycle between a cross-link and a non-cross-linked state depending on DNA context: mediates self-reversal of the thiazolidine cross-link in double stranded DNA. May act as a protease: mediates autocatalytic processing of its N-terminal methionine in order to expose the catalytic cysteine. This chain is Abasic site processing protein YoqW (yoqW), found in Bacillus subtilis (strain 168).